We begin with the raw amino-acid sequence, 2485 residues long: Polyprotein P1234 (2485 aa).

The Alphavirus-like MT domain occupies 28–259; sequence EAKQVTDNDH…EKRDLLRSWH (232 aa). Residues 244–263 form a nsP1 membrane-binding region; sequence GSTIYHEKRDLLRSWHLPSV. A lipid anchor (S-palmitoyl cysteine; by host) is attached at cysteine 419. Positions 690–841 constitute a (+)RNA virus helicase ATP-binding domain; that stretch reads ELVDPPFHEF…HEICTQVFHK (152 aa). 721-728 contacts a ribonucleoside 5'-triphosphate; that stretch reads GVPGSGKS. A (+)RNA virus helicase C-terminal domain is found at 842–990; it reads SISRRCTKSV…IEEWQAEHDA (149 aa). Residues 1003 to 1322 form the Peptidase C9 domain; sequence DVFQNKANVC…STLTNIYTGS (320 aa). Residues 1004 to 1023 are nucleolus localization signal; the sequence is VFQNKANVCWAKALVPVLKT. Catalysis depends on cysteine 1012, which acts as the For cysteine protease nsP2 activity. The short motif at 1056-1065 is the Nuclear export signal element; the sequence is VRFFGLDLDS. Histidine 1081 acts as the For cysteine protease nsP2 activity in catalysis. The Nuclear localization signal signature appears at 1179-1183; it reads PGKTV. In terms of domain architecture, Macro spans 1328–1489; that stretch reads GCAPSYHVVR…TLKEAVARRE (162 aa). Aspartate 1339, asparagine 1353, glycine 1361, glycine 1441, isoleucine 1442, and phenylalanine 1443 together coordinate ADP-D-ribose. Residues cysteine 1596, cysteine 1598, cysteine 1621, and cysteine 1639 each coordinate Zn(2+). The interval 1783 to 1810 is disordered; the sequence is PRTVFRNPPQPAPRTRTPSLAPSRASSR. The span at 1798 to 1810 shows a compositional bias: polar residues; that stretch reads RTPSLAPSRASSR. Tandem repeats lie at residues 1810–1831 and 1844–1865. The interval 1810–1865 is 2 X 21 AA approximate repeats, binding to host FXR family members; sequence RISLVSNPPGVNRVITREELEALTPSRAPSRSVSRTSLVSNPPGVNRVITREEFEA. Residues 2242 to 2357 enclose the RdRp catalytic domain; it reads DCVLETDIAS…KGVKSDKLMA (116 aa).

In terms of assembly, interacts with non-structural protein 3. Interacts with RNA-directed RNA polymerase nsP4. Interacts with protease nsP2. interacts with itself. As to quaternary structure, interacts with mRNA-capping enzyme nsP1. Interacts with host DDX1. Interacts with host DDX3. Interacts (via C-terminus) with host FXR1; this interaction inhibits the formation of host stress granules on viral mRNAs and the nsp3-FXR1 complexes bind viral RNAs and probably orchestrate the assembly of viral replication complexes. Interacts (via C-terminus) with host FXR2; this interaction inhibits the formation of host stress granules on viral mRNAs and the nsp3-FXR2 complexes bind viral RNAs and probably orchestrate the assembly of viral replication complexes. Interacts (via C-terminus) with host FMR1; this interaction inhibits the formation of host stress granules on viral mRNAs and the nsp3-FMR1 complexes bind viral RNAs and probably orchestrate the assembly of viral replication complexes. Interacts with mRNA-capping enzyme nsP1. Interacts with protease nsP2. interacts with itself. In terms of assembly, interacts with RNA-directed RNA polymerase nsP4. Interacts with mRNA-capping enzyme nsP1. Interacts with KPNA1/karyopherin-alpha1; this interaction probably allows the active transport of protease nsP2 into the host nucleus. The cofactor is Mg(2+). It depends on Mn(2+) as a cofactor. Post-translationally, specific enzymatic cleavages in vivo yield mature proteins. The processing of the polyprotein is temporally regulated. In early stages (1.7 hpi), P1234 is first cleaved in trans through its nsP2 protease activity, releasing P123' and nsP4, which associate to form the early replication complex. At the same time, P1234 is also cut at the nsP1/nsP2 site early in infection but with lower efficiency. After replication of the viral minus-strand RNAs (4 hpi), the polyproteins are cut at the nsP1/nsP2 and nsP2/nsP3 sites very efficiently, preventing accumulation of P123' and P1234 and allowing the formation of the late replication complex. NsP3'/nsP4 site is not cleaved anymore and P34 is produced rather than nsP4. Specific enzymatic cleavages in vivo yield mature proteins. The processing of the polyprotein is temporally regulated. In early stages (1.7 hpi), P123 is cleaved at the nsP1/nsP2 site with low efficiency. After replication of the viral minus-strand RNAs (4 hpi), the polyproteins are cut at the nsP1/nsP2 and nsP2/nsP3 sites very efficiently, preventing accumulation of P123 and allowing the formation of the late replication complex. In terms of processing, specific enzymatic cleavages in vivo yield mature proteins. The processing of the polyprotein is temporally regulated. In early stages (1.7 hpi), P123' is cleaved at the nsP1/nsP2 site with low efficiency. After replication of the viral minus-strand RNAs (4 hpi), the polyproteins are cut at the nsP1/nsP2 and nsP2/nsP3 sites very efficiently, preventing accumulation of P123' and allowing the formation of the late replication complex. Post-translationally, palmitoylated by host palmitoyltransferases ZDHHC2 and ZDHHC19. Phosphorylated by host on serines and threonines. In terms of processing, ubiquitinated; targets the protein for rapid degradation via the ubiquitin system. Nsp4 is present in extremely low quantities due to low frequency of translation through the amber stop-codon and the degradation by the ubiquitin pathway.

It localises to the host cytoplasmic vesicle membrane. Its subcellular location is the host cell membrane. It is found in the host cell projection. The protein resides in the host filopodium. The protein localises to the host nucleus. It localises to the host cytoplasm. The enzyme catalyses GTP + S-adenosyl-L-methionine = N(7)-methyl-GTP + S-adenosyl-L-homocysteine. It catalyses the reaction N(7)-methyl-GTP + L-histidyl-[protein] = N(tele)-(N(7)-methylguanosine 5'-phospho)-L-histidyl-[protein] + diphosphate. The catalysed reaction is N(tele)-(N(7)-methylguanosine 5'-phospho)-L-histidyl-[protein] + a 5'-end diphospho-(purine-ribonucleoside) in mRNA + H(+) = a 5'-end (N(7)-methyl 5'-triphosphoguanosine)-(purine-ribonucleoside) in mRNA + L-histidyl-[protein]. It carries out the reaction a 5'-end triphospho-ribonucleoside in mRNA + H2O = a 5'-end diphospho-ribonucleoside in mRNA + phosphate + H(+). The enzyme catalyses a ribonucleoside 5'-triphosphate + H2O = a ribonucleoside 5'-diphosphate + phosphate + H(+). It catalyses the reaction ATP + H2O = ADP + phosphate + H(+). The catalysed reaction is RNA(n) + a ribonucleoside 5'-triphosphate = RNA(n+1) + diphosphate. It carries out the reaction 4-O-(ADP-D-ribosyl)-L-aspartyl-[protein] + H2O = L-aspartyl-[protein] + ADP-D-ribose + H(+). The enzyme catalyses 5-O-(ADP-D-ribosyl)-L-glutamyl-[protein] + H2O = L-glutamyl-[protein] + ADP-D-ribose + H(+). It catalyses the reaction RNA(n) + ATP = RNA(n)-3'-adenine ribonucleotide + diphosphate. The catalysed reaction is ADP-alpha-D-ribose 1''-phosphate + H2O = ADP-D-ribose + phosphate. Its activity is regulated as follows. Inhibited by sinefungin. Functionally, inactive precursor of the viral replicase, which is activated by cleavages carried out by the viral protease nsP2. The early replication complex formed by the polyprotein P123 and nsP4 synthesizes the minus-strand RNAs (antigenome). Polyprotein P123 is a short-lived polyprotein that accumulates during early stage of infection. As soon P123 is cleaved into mature proteins, the plus-strand RNAs synthesis begins. In terms of biological role, the early replication complex formed by the polyprotein P123' and nsP4 synthesizes minus-strand RNAs (antigenome). Polyprotein P123' is a short-lived polyprotein that accumulates during early stage of infection. As soon P123' is cleaved into mature proteins, the plus-strand RNAs synthesis begins. Its function is as follows. Cytoplasmic capping enzyme that catalyzes two virus-specific reactions: methyltransferase and nsP1 guanylyltransferase. mRNA-capping is necessary since all viral RNAs are synthesized in the cytoplasm, and host capping enzymes are restricted to the nucleus. The enzymatic reaction involves a covalent link between 7-methyl-GMP and nsP1, whereas eukaryotic capping enzymes form a covalent complex only with GMP. NsP1 capping consists in the following reactions: GTP is first methylated into 7-methyl-GMP and then is covalently linked to nsP1 to form the m7GMp-nsP1 complex from which 7-methyl-GMP complex is transferred to the mRNA to create the cap structure. NsP1 is also needed for the initiation of the minus-strand RNAs synthesis. Probably serves as a membrane anchor for the replication complex composed of nsP1-nsP4. Nsp1 is needed for the initiation of the minus-strand RNAs synthesis. Palmitoylated nsP1 is remodeling host cell cytoskeleton, and induces filopodium-like structure formation at the surface of the host cell. Functionally, multifunctional protein whose N-terminus is part of the RNA polymerase complex and displays NTPase, RNA triphosphatase and helicase activities. NTPase and RNA triphosphatase are involved in viral RNA capping and helicase keeps a check on the dsRNA replication intermediates. The C-terminus harbors a protease that specifically cleaves the polyproteins and releases the mature proteins. Required for the shutoff of minus-strand RNAs synthesis. Inhibits host translation to ensure maximal viral gene expression and evade host immune response. Seems to be essential for minus-strand RNAs and subgenomic 26S mRNAs synthesis. Displays mono-ADP-ribosylhydrolase activity. ADP-ribosylation is a post-translational modification that controls various processes of the host cell and the virus probably needs to revert it for optimal viral replication. Binds proteins of FXR family and sequesters them into the viral RNA replication complexes thereby inhibiting the formation of host stress granules on viral mRNAs. The nsp3-FXR complexes bind viral RNAs and probably orchestrate the assembly of viral replication complexes, thanks to the ability of FXR family members to self-assemble and bind DNA. In terms of biological role, seems to be essential for minus-strand RNAs and subgenomic 26S mRNAs synthesis. Displays mono-ADP-ribosylhydrolase activity. ADP-ribosylation is a post-translational modification that controls various processes of the host cell and the virus probably needs to revert it for optimal viral replication. Binds proteins of FXR family and sequesters them into the viral RNA replication complexes thereby inhibiting the formation of host stress granules on viral mRNAs. The nsp3'-FXR complexes bind viral RNAs and probably orchestrate the assembly of viral replication complexes, thanks to the ability of FXR family members to self-assemble and bind DNA. Its function is as follows. RNA dependent RNA polymerase. Replicates genomic and antigenomic RNA by recognizing replications specific signals. The early replication complex formed by the polyprotein P123 and nsP4 synthesizes minus-strand RNAs. The late replication complex composed of fully processed nsP1-nsP4 is responsible for the production of genomic and subgenomic plus-strand RNAs. The chain is Polyprotein P1234 from Venezuelan equine encephalitis virus (strain 3880) (VEEV).